A 424-amino-acid chain; its full sequence is MFLLPRFVLVSCIIGSLGFDNPPTNVVSHLNGDWFLFGDSRSDCNHVVTTNPRNYSYMDLNPALCDSGKISSKAGNSIFRSFHFTDFYNYTGEGQQIIFYEGVNFTPYHAFKCTTSGSNDIWMQNKGLFYTQLYKNMAVYRSLTFVNVPYVYNGSAQSTALCKSGSLVLNNPAYIAREANFGDYYYKVEADFYLSGCDEYIVPLCIFNGKFLSNTKYYDDSQYYFNKDTGVIYGLNSTETITTGFDFNCHYLVLPSGNYLAISNELLLTVPTKAICLNKRKDFTPVQVVDSRWNNAMQSDNMTAVACQPPYCYFRNSTTNYVGVYDINHGDAGFTSILSGLLYDSPCFSQQGVFRYDNVSSVWPLYPYGRCPTAADINTPDVPICVYDPLPIILLGILLGVAVIIIVVLLLYFMVDNGTRLHDA.

The first 16 residues, Met-1–Ser-16, serve as a signal peptide directing secretion. The interval Phe-7–Gly-127 is esterase domain 1. The Virion surface segment spans residues Leu-17 to Ile-392. The active-site Nucleophile is the Ser-40. A disulfide bridge connects residues Cys-44 and Cys-65. Residues Asn-54, Asn-89, Asn-153, Asn-236, and Asn-301 are each glycosylated (N-linked (GlcNAc...) asparagine; by host). Disulfide bonds link Cys-113–Cys-162, Cys-197–Cys-276, and Cys-205–Cys-249. The receptor binding stretch occupies residues Leu-128 to Leu-266. The esterase domain 2 stretch occupies residues Leu-267–Thr-379. Cys-307 and Cys-312 are joined by a disulfide. Asn-316 carries N-linked (GlcNAc...) asparagine; by host glycosylation. Residues Asp-326 and His-329 each act as charge relay system in the active site. A disulfide bond links Cys-347 and Cys-371. N-linked (GlcNAc...) asparagine; by host glycosylation is present at Asn-358. The helical transmembrane segment at Ile-393–Phe-413 threads the bilayer. Residues Met-414–Ala-424 are Intravirion-facing. N-linked (GlcNAc...) asparagine; by host glycosylation occurs at Asn-417.

It belongs to the influenza type C/coronaviruses hemagglutinin-esterase family. Homodimer; disulfide-linked. Forms a complex with the M protein in the pre-Golgi. Associates then with S-M complex to form a ternary complex S-M-HE. N-glycosylated in the host RER.

Its subcellular location is the virion membrane. It is found in the host cell membrane. It carries out the reaction N-acetyl-9-O-acetylneuraminate + H2O = N-acetylneuraminate + acetate + H(+). It catalyses the reaction N-acetyl-4-O-acetylneuraminate + H2O = N-acetylneuraminate + acetate + H(+). In terms of biological role, structural protein that makes short spikes at the surface of the virus. Contains receptor binding and receptor-destroying activities. Mediates de-O-acetylation of N-acetyl-4-O-acetylneuraminic acid, which is probably the receptor determinant recognized by the virus on the surface of erythrocytes and susceptible cells. This receptor-destroying activity is important for virus release as it probably helps preventing self-aggregation and ensures the efficient spread of the progeny virus from cell to cell. May serve as a secondary viral attachment protein for initiating infection, the spike protein being the major one. May become a target for both the humoral and the cellular branches of the immune system. This Bovine coronavirus (strain LSU-94LSS-051) (BCoV-LSU) protein is Hemagglutinin-esterase.